An 85-amino-acid chain; its full sequence is Depressant scorpion toxin BmKIM (85 aa).

The signal sequence occupies residues 1 to 21 (MKLFLLLVFFASMLIDGLVNA). Residues 22-82 (DGYIRGSNGC…TWKSESNTCG (61 aa)) form the LCN-type CS-alpha/beta domain. 4 cysteine pairs are disulfide-bonded: Cys31-Cys81, Cys35-Cys56, Cys42-Cys63, and Cys46-Cys65. Position 82 is a glycine amide (Gly82).

This sequence belongs to the long (4 C-C) scorpion toxin superfamily. Sodium channel inhibitor family. In terms of tissue distribution, expressed by the venom gland.

The protein localises to the secreted. In terms of biological role, causes a slow progressive depressant flaccid paralysis, when injected into S.falculata blowfly larvae. Inhibits dose-dependently the total sodium (Nav) currents both in dorsal root ganglia neurons and in ventricular myocytes. Is toxic to mice by intravenous injection, but not by subcutaneous or intracerebroventricular injection. Produces antiarrhythmia in rat. Is then active on both mammals and insects. The polypeptide is Depressant scorpion toxin BmKIM (KIM2) (Olivierus martensii (Manchurian scorpion)).